A 115-amino-acid chain; its full sequence is NADH-ubiquinone oxidoreductase chain 3 (115 aa).

A run of 3 helical transmembrane segments spans residues 3–23 (VMLT…IAFW), 55–75 (FFLV…LLPL), and 84–104 (LTTM…SLAY).

This sequence belongs to the complex I subunit 3 family. As to quaternary structure, core subunit of respiratory chain NADH dehydrogenase (Complex I) which is composed of 45 different subunits. Interacts with TMEM186. Interacts with TMEM242.

It is found in the mitochondrion inner membrane. It catalyses the reaction a ubiquinone + NADH + 5 H(+)(in) = a ubiquinol + NAD(+) + 4 H(+)(out). Functionally, core subunit of the mitochondrial membrane respiratory chain NADH dehydrogenase (Complex I) which catalyzes electron transfer from NADH through the respiratory chain, using ubiquinone as an electron acceptor. Essential for the catalytic activity of complex I. The chain is NADH-ubiquinone oxidoreductase chain 3 from Canis lupus familiaris (Dog).